The chain runs to 582 residues: DNA polymerase IV (582 aa).

Residues 127–161 (NADDGQSSTDKESEISTDVESERNDDSNNKDMIQA) form a disordered region. A compositionally biased stretch (basic and acidic residues) spans 135–155 (TDKESEISTDVESERNDDSNN). The segment at 360-369 (RGYSKCGDID) is involved in ssDNA binding. Mg(2+) is bound by residues Asp367, Asp369, and Asp502.

This sequence belongs to the DNA polymerase type-X family. Interacts with DNL4 subunit of the DNL4-LIF1 complex. It depends on Mg(2+) as a cofactor.

The protein localises to the nucleus. It catalyses the reaction DNA(n) + a 2'-deoxyribonucleoside 5'-triphosphate = DNA(n+1) + diphosphate. With respect to regulation, stimulated by the interaction with the DNL4-LIF1 complex. Repair polymerase. Involved in gap-filling in DNA nonhomologous end joining (NHEJ) required for double-strand break repair. Seems to conduct DNA synthesis in a stepwise distributive fashion rather than in a processive fashion as for other DNA polymerases. Preferentially acts upon short gaps formed by the alignment of linear duplexes with complementary single-strand ends. Required for filling gaps that need removal of a 5'- or 3'-terminal mismatch, however lacks nuclease activities. The chain is DNA polymerase IV (POL4) from Saccharomyces cerevisiae (strain ATCC 204508 / S288c) (Baker's yeast).